The primary structure comprises 410 residues: Venom metalloproteinase 2 (410 aa).

Positions 1–22 (MDTFILTYSILFLALFIESIHS) are cleaved as a signal peptide. N-linked (GlcNAc...) asparagine glycans are attached at residues N64, N112, N187, N231, N292, and N307. Residues 214 to 410 (FYPKLLVLVD…NNNVSKFIWS (197 aa)) form the Peptidase M12B domain. H365 serves as a coordination point for Zn(2+). E366 is a catalytic residue. H369 and H375 together coordinate Zn(2+). Residue N403 is glycosylated (N-linked (GlcNAc...) asparagine).

The protein in the C-terminal section; belongs to the venom metalloproteinase (M12B) family. Monomer. Requires Zn(2+) as cofactor. As to expression, expressed by the venom gland.

The protein localises to the secreted. With respect to regulation, the gelatinase activity is inhibited by EDTA. The recombinant protein has gelatinase activity. In vivo, injection of this recombinant into fifth instar L.oleracea (host) larvae results in partial insect mortality associated with the molt to sixth instar, with surviving insects showing retarded development and growth. This chain is Venom metalloproteinase 2, found in Eulophus pennicornis (Parasitoid wasp).